Reading from the N-terminus, the 273-residue chain is Large ribosomal subunit protein uL2 (273 aa).

2 disordered regions span residues 28 to 53 (KPFA…TTRH) and 221 to 273 (RGTA…RRTK). A compositionally biased stretch (low complexity) spans 39-48 (KSGGRNNNGR).

The protein belongs to the universal ribosomal protein uL2 family. Part of the 50S ribosomal subunit. Forms a bridge to the 30S subunit in the 70S ribosome.

Functionally, one of the primary rRNA binding proteins. Required for association of the 30S and 50S subunits to form the 70S ribosome, for tRNA binding and peptide bond formation. It has been suggested to have peptidyltransferase activity; this is somewhat controversial. Makes several contacts with the 16S rRNA in the 70S ribosome. This is Large ribosomal subunit protein uL2 from Pectobacterium atrosepticum (strain SCRI 1043 / ATCC BAA-672) (Erwinia carotovora subsp. atroseptica).